Reading from the N-terminus, the 1091-residue chain is ATP-dependent helicase/deoxyribonuclease subunit B (1091 aa).

It belongs to the helicase family. AddB/RexB type 2 subfamily. As to quaternary structure, heterodimer of AddA and RexB. It depends on Mg(2+) as a cofactor.

Functionally, the heterodimer acts as both an ATP-dependent DNA helicase and an ATP-dependent, dual-direction single-stranded exonuclease. Recognizes the chi site generating a DNA molecule suitable for the initiation of homologous recombination. This subunit has 5' -&gt; 3' nuclease activity but not helicase activity. In Streptococcus pneumoniae (strain Hungary19A-6), this protein is ATP-dependent helicase/deoxyribonuclease subunit B.